Consider the following 283-residue polypeptide: MTFRQYIELLKPRIALMIALTAITGYGAVATKVDPVALLLLTLAMILGSAASAVFNHVWDRDIDRLMRRTSRRPMATGAGTPALGFALAVVLMVAGMALANAAFNWVVALHLFLGGFVYVAIYTVWLKRRHWTNIIIGGAAGSFAVLAGAAAVDQTQWLLPMVLALVLFLWTPSHFWSLAILLADDYRQAGVPMLPVVVGAKRTAWCILANTVILVGASLLPWGLGLLGNVYGFVAAVSGAVLLGFNVVLVRDTSRRWAGWNFAASMPYLLLLFIAVFADKHW.

9 helical membrane passes run 14–34 (IALM…TKVD), 35–55 (PVAL…SAVF), 84–104 (LGFA…NAAF), 107–127 (VVAL…TVWL), 133–153 (TNII…AAAV), 163–183 (VLAL…AILL), 208–228 (ILAN…LGLL), 231–251 (VYGF…VVLV), and 258–278 (WAGW…IAVF).

This sequence belongs to the UbiA prenyltransferase family. Protoheme IX farnesyltransferase subfamily.

The protein localises to the cell inner membrane. The catalysed reaction is heme b + (2E,6E)-farnesyl diphosphate + H2O = Fe(II)-heme o + diphosphate. The protein operates within porphyrin-containing compound metabolism; heme O biosynthesis; heme O from protoheme: step 1/1. Its function is as follows. Converts heme B (protoheme IX) to heme O by substitution of the vinyl group on carbon 2 of heme B porphyrin ring with a hydroxyethyl farnesyl side group. This is Protoheme IX farnesyltransferase 1 from Paramagnetospirillum magneticum (strain ATCC 700264 / AMB-1) (Magnetospirillum magneticum).